Consider the following 376-residue polypeptide: Succinyl-diaminopimelate desuccinylase (376 aa).

Histidine 67 serves as a coordination point for Zn(2+). Residue aspartate 69 is part of the active site. Position 100 (aspartate 100) interacts with Zn(2+). Glutamate 134 functions as the Proton acceptor in the catalytic mechanism. The Zn(2+) site is built by glutamate 135, glutamate 163, and histidine 349.

The protein belongs to the peptidase M20A family. DapE subfamily. In terms of assembly, homodimer. The cofactor is Zn(2+). It depends on Co(2+) as a cofactor.

It carries out the reaction N-succinyl-(2S,6S)-2,6-diaminopimelate + H2O = (2S,6S)-2,6-diaminopimelate + succinate. It participates in amino-acid biosynthesis; L-lysine biosynthesis via DAP pathway; LL-2,6-diaminopimelate from (S)-tetrahydrodipicolinate (succinylase route): step 3/3. In terms of biological role, catalyzes the hydrolysis of N-succinyl-L,L-diaminopimelic acid (SDAP), forming succinate and LL-2,6-diaminopimelate (DAP), an intermediate involved in the bacterial biosynthesis of lysine and meso-diaminopimelic acid, an essential component of bacterial cell walls. In Shewanella denitrificans (strain OS217 / ATCC BAA-1090 / DSM 15013), this protein is Succinyl-diaminopimelate desuccinylase.